The primary structure comprises 353 residues: Peptide methionine sulfoxide reductase MsrA/MsrB (353 aa).

The peptide methionine sulfoxide reductase A stretch occupies residues 43–196; the sequence is REIYLAGGCF…PNGYCHIDIT (154 aa). The active site involves Cys-51. The MsrB domain occupies 213 to 336; the sequence is DAELKAKLTP…NSASIKFIPL (124 aa). The active-site Nucleophile is the Cys-325.

In the N-terminal section; belongs to the MsrA Met sulfoxide reductase family. The protein in the C-terminal section; belongs to the MsrB Met sulfoxide reductase family.

The enzyme catalyses L-methionyl-[protein] + [thioredoxin]-disulfide + H2O = L-methionyl-(S)-S-oxide-[protein] + [thioredoxin]-dithiol. The catalysed reaction is [thioredoxin]-disulfide + L-methionine + H2O = L-methionine (S)-S-oxide + [thioredoxin]-dithiol. It catalyses the reaction L-methionyl-[protein] + [thioredoxin]-disulfide + H2O = L-methionyl-(R)-S-oxide-[protein] + [thioredoxin]-dithiol. Its function is as follows. Has an important function as a repair enzyme for proteins that have been inactivated by oxidation. Catalyzes the reversible oxidation-reduction of methionine sulfoxide in proteins to methionine. This Haemophilus influenzae (strain ATCC 51907 / DSM 11121 / KW20 / Rd) protein is Peptide methionine sulfoxide reductase MsrA/MsrB (msrAB).